Reading from the N-terminus, the 235-residue chain is Uridylate kinase (235 aa).

8–11 (KLSG) provides a ligand contact to ATP. Gly-49 provides a ligand contact to UMP. ATP is bound by residues Gly-50 and Arg-54. Position 131–138 (131–138 (TGNPYFST)) interacts with UMP. ATP is bound by residues Asn-159, Tyr-165, and Asp-168.

The protein belongs to the UMP kinase family. As to quaternary structure, homohexamer.

The protein resides in the cytoplasm. The enzyme catalyses UMP + ATP = UDP + ADP. Its pathway is pyrimidine metabolism; CTP biosynthesis via de novo pathway; UDP from UMP (UMPK route): step 1/1. Inhibited by UTP. In terms of biological role, catalyzes the reversible phosphorylation of UMP to UDP. The polypeptide is Uridylate kinase (Mycoplasma pneumoniae (strain ATCC 29342 / M129 / Subtype 1) (Mycoplasmoides pneumoniae)).